We begin with the raw amino-acid sequence, 142 residues long: ATP synthase epsilon chain (142 aa).

The protein belongs to the ATPase epsilon chain family. F-type ATPases have 2 components, CF(1) - the catalytic core - and CF(0) - the membrane proton channel. CF(1) has five subunits: alpha(3), beta(3), gamma(1), delta(1), epsilon(1). CF(0) has three main subunits: a, b and c.

Its subcellular location is the cell inner membrane. Its function is as follows. Produces ATP from ADP in the presence of a proton gradient across the membrane. The protein is ATP synthase epsilon chain of Maridesulfovibrio salexigens (strain ATCC 14822 / DSM 2638 / NCIMB 8403 / VKM B-1763) (Desulfovibrio salexigens).